Consider the following 553-residue polypeptide: Heterochromatin protein 1-binding protein 3 (553 aa).

An N-acetylalanine modification is found at Ala-2. Position 6 is a phosphoserine (Ser-6). Disordered stretches follow at residues Lys-29 to Pro-134 and Ser-140 to Pro-159. Thr-51 carries the phosphothreonine modification. The segment covering Gly-60 to Ser-71 has biased composition (acidic residues). A Glycyl lysine isopeptide (Lys-Gly) (interchain with G-Cter in SUMO2) cross-link involves residue Lys-64. Thr-85 is modified (phosphothreonine). The span at Glu-94–Lys-127 shows a compositional bias: basic and acidic residues. Lys-97 is covalently cross-linked (Glycyl lysine isopeptide (Lys-Gly) (interchain with G-Cter in SUMO2)). A compositionally biased stretch (polar residues) spans Ser-140–Ala-154. Ser-142, Ser-155, and Ser-156 each carry phosphoserine. Positions Pro-157–Gln-232 constitute an H15 1 domain. Position 190 is an N6-acetyllysine (Lys-190). The tract at residues Val-230–Pro-255 is disordered. Residues Lys-233–Arg-247 show a composition bias toward basic residues. Ser-248 and Ser-249 each carry phosphoserine. The PxVxL motif signature appears at Pro-255 to Leu-259. 2 H15 domains span residues Pro-255–Lys-330 and Leu-337–Phe-413. Lys-258 is covalently cross-linked (Glycyl lysine isopeptide (Lys-Gly) (interchain with G-Cter in SUMO2)). The segment at Leu-422–Lys-553 is disordered. The span at Asp-430–Glu-450 shows a compositional bias: acidic residues. Ser-441, Ser-442, and Ser-446 each carry phosphoserine. Over residues Gly-489–Arg-510 the composition is skewed to basic residues. Residues Lys-517–Pro-527 are compositionally biased toward low complexity. Basic residues predominate over residues Ser-543 to Lys-553.

Interacts (via PxVxL motif) with CBX5 (via Trp-174).

The protein resides in the nucleus. It localises to the chromosome. Component of heterochromatin that maintains heterochromatin integrity during G1/S progression and regulates the duration of G1 phase to critically influence cell proliferative capacity. Mediates chromatin condensation during hypoxia, leading to increased tumor cell viability, radio-resistance, chemo-resistance and self-renewal. The sequence is that of Heterochromatin protein 1-binding protein 3 (HP1BP3) from Homo sapiens (Human).